The sequence spans 74 residues: Antimicrobial peptide HsAp1 (74 aa).

Residues 1–21 (MSRRVILTLVLVTILVKTMAG) form the signal peptide. Positions 22–33 (MESKKVETTDEI) are excised as a propeptide. Proline 65 is modified (proline amide). Residues 69-74 (AISEQT) constitute a propeptide that is removed on maturation.

Belongs to the non-disulfide-bridged peptide (NDBP) superfamily. Medium-length antimicrobial peptide (group 3) family. Expressed by the venom gland.

It localises to the secreted. It is found in the target cell membrane. Its function is as follows. Possesses antimicrobial activity against both Gram-negative (MIC=23.8-51.2 uM) and Gram-positive (MIC=11.8-46.5 uM) bacteria, as well as against the fungus C.tropicalis (MIC=48.6 uM). Also possesses a relatively high hemolytic activity. May act by disrupting the integrity of the bacterial cell membrane. The protein is Antimicrobial peptide HsAp1 of Heterometrus spinifer (Asia giant forest scorpion).